The chain runs to 264 residues: Thymidylate synthase 2 (264 aa).

Arg-21 lines the dUMP pocket. Residue His-51 participates in (6R)-5,10-methylene-5,6,7,8-tetrahydrofolate binding. Arg-126 to Arg-127 lines the dUMP pocket. Residue Cys-146 is the Nucleophile of the active site. Residues Arg-166–Asp-169, Asn-177, and His-207–Tyr-209 contribute to the dUMP site. Position 169 (Asp-169) interacts with (6R)-5,10-methylene-5,6,7,8-tetrahydrofolate. (6R)-5,10-methylene-5,6,7,8-tetrahydrofolate is bound at residue Ser-263.

It belongs to the thymidylate synthase family. Bacterial-type ThyA subfamily. In terms of assembly, homodimer.

Its subcellular location is the cytoplasm. The catalysed reaction is dUMP + (6R)-5,10-methylene-5,6,7,8-tetrahydrofolate = 7,8-dihydrofolate + dTMP. It functions in the pathway pyrimidine metabolism; dTTP biosynthesis. Catalyzes the reductive methylation of 2'-deoxyuridine-5'-monophosphate (dUMP) to 2'-deoxythymidine-5'-monophosphate (dTMP) while utilizing 5,10-methylenetetrahydrofolate (mTHF) as the methyl donor and reductant in the reaction, yielding dihydrofolate (DHF) as a by-product. This enzymatic reaction provides an intracellular de novo source of dTMP, an essential precursor for DNA biosynthesis. The protein is Thymidylate synthase 2 of Bacillus subtilis (strain 168).